Here is a 197-residue protein sequence, read N- to C-terminus: Large ribosomal subunit protein bL25 (197 aa).

It belongs to the bacterial ribosomal protein bL25 family. CTC subfamily. Part of the 50S ribosomal subunit; part of the 5S rRNA/L5/L18/L25 subcomplex. Contacts the 5S rRNA. Binds to the 5S rRNA independently of L5 and L18.

Functionally, this is one of the proteins that binds to the 5S RNA in the ribosome where it forms part of the central protuberance. In Carboxydothermus hydrogenoformans (strain ATCC BAA-161 / DSM 6008 / Z-2901), this protein is Large ribosomal subunit protein bL25.